We begin with the raw amino-acid sequence, 576 residues long: Arginine--tRNA ligase (576 aa).

Residues 122–132 (PNVAKEMHVGH) carry the 'HIGH' region motif.

The protein belongs to the class-I aminoacyl-tRNA synthetase family. In terms of assembly, monomer.

The protein resides in the cytoplasm. It carries out the reaction tRNA(Arg) + L-arginine + ATP = L-arginyl-tRNA(Arg) + AMP + diphosphate. The polypeptide is Arginine--tRNA ligase (Erwinia tasmaniensis (strain DSM 17950 / CFBP 7177 / CIP 109463 / NCPPB 4357 / Et1/99)).